The sequence spans 389 residues: Phospho-N-acetylmuramoyl-pentapeptide-transferase (389 aa).

Helical transmembrane passes span Arg-25–Ile-45, Met-74–Gly-94, Phe-97–Tyr-117, Phe-134–Glu-154, Val-190–Ser-210, Gly-222–Met-242, Ala-259–Phe-279, Val-286–Ile-306, Ile-311–Val-331, and Gln-366–Leu-386.

This sequence belongs to the glycosyltransferase 4 family. MraY subfamily. Mg(2+) is required as a cofactor.

It is found in the cell inner membrane. It catalyses the reaction UDP-N-acetyl-alpha-D-muramoyl-L-alanyl-gamma-D-glutamyl-meso-2,6-diaminopimeloyl-D-alanyl-D-alanine + di-trans,octa-cis-undecaprenyl phosphate = di-trans,octa-cis-undecaprenyl diphospho-N-acetyl-alpha-D-muramoyl-L-alanyl-D-glutamyl-meso-2,6-diaminopimeloyl-D-alanyl-D-alanine + UMP. It participates in cell wall biogenesis; peptidoglycan biosynthesis. In terms of biological role, catalyzes the initial step of the lipid cycle reactions in the biosynthesis of the cell wall peptidoglycan: transfers peptidoglycan precursor phospho-MurNAc-pentapeptide from UDP-MurNAc-pentapeptide onto the lipid carrier undecaprenyl phosphate, yielding undecaprenyl-pyrophosphoryl-MurNAc-pentapeptide, known as lipid I. This is Phospho-N-acetylmuramoyl-pentapeptide-transferase from Cupriavidus pinatubonensis (strain JMP 134 / LMG 1197) (Cupriavidus necator (strain JMP 134)).